The sequence spans 254 residues: Triosephosphate isomerase (254 aa).

Position 9–11 (9–11 (NWK)) interacts with substrate. His-96 serves as the catalytic Electrophile. Catalysis depends on Glu-169, which acts as the Proton acceptor. Residues Gly-175, Ser-215, and 236–237 (GG) contribute to the substrate site.

It belongs to the triosephosphate isomerase family. As to quaternary structure, homodimer.

The protein resides in the cytoplasm. It carries out the reaction D-glyceraldehyde 3-phosphate = dihydroxyacetone phosphate. Its pathway is carbohydrate biosynthesis; gluconeogenesis. The protein operates within carbohydrate degradation; glycolysis; D-glyceraldehyde 3-phosphate from glycerone phosphate: step 1/1. Involved in the gluconeogenesis. Catalyzes stereospecifically the conversion of dihydroxyacetone phosphate (DHAP) to D-glyceraldehyde-3-phosphate (G3P). The protein is Triosephosphate isomerase of Borrelia duttonii (strain Ly).